The following is a 104-amino-acid chain: Nucleoid-associated protein Bsph_0039 (104 aa).

Over residues 1–12 the composition is skewed to low complexity; the sequence is MRGMGNMQGMMK. The segment at 1-22 is disordered; it reads MRGMGNMQGMMKKMQKMQKEMM.

The protein belongs to the YbaB/EbfC family. As to quaternary structure, homodimer.

It localises to the cytoplasm. Its subcellular location is the nucleoid. In terms of biological role, binds to DNA and alters its conformation. May be involved in regulation of gene expression, nucleoid organization and DNA protection. The polypeptide is Nucleoid-associated protein Bsph_0039 (Lysinibacillus sphaericus (strain C3-41)).